The following is a 640-amino-acid chain: 1-deoxy-D-xylulose-5-phosphate synthase (640 aa).

Thiamine diphosphate-binding positions include His-78 and 119–121; that span reads GHS. Asp-151 lines the Mg(2+) pocket. Thiamine diphosphate-binding positions include 152–153, Asn-180, Tyr-289, and Glu-371; that span reads GA. A Mg(2+)-binding site is contributed by Asn-180.

This sequence belongs to the transketolase family. DXPS subfamily. In terms of assembly, homodimer. Mg(2+) is required as a cofactor. Requires thiamine diphosphate as cofactor.

The catalysed reaction is D-glyceraldehyde 3-phosphate + pyruvate + H(+) = 1-deoxy-D-xylulose 5-phosphate + CO2. It functions in the pathway metabolic intermediate biosynthesis; 1-deoxy-D-xylulose 5-phosphate biosynthesis; 1-deoxy-D-xylulose 5-phosphate from D-glyceraldehyde 3-phosphate and pyruvate: step 1/1. In terms of biological role, catalyzes the acyloin condensation reaction between C atoms 2 and 3 of pyruvate and glyceraldehyde 3-phosphate to yield 1-deoxy-D-xylulose-5-phosphate (DXP). In Bartonella henselae (strain ATCC 49882 / DSM 28221 / CCUG 30454 / Houston 1) (Rochalimaea henselae), this protein is 1-deoxy-D-xylulose-5-phosphate synthase.